A 410-amino-acid polypeptide reads, in one-letter code: Lipid droplet-regulating VLDL assembly factor AUP1 (410 aa).

Residue Met-1 is modified to N-acetylmethionine. Residues 1–20 are Cytoplasmic-facing; the sequence is MELPSGPGPERLFDSHRLPG. Ser-5 carries the phosphoserine modification. Residues 21-41 lie within the membrane without spanning it; it reads DCFLLLVLLLYAPVGFCLLVL. Topologically, residues 42 to 410 are cytoplasmic; that stretch reads RLFLGIHVFL…FTERRAQEAD (369 aa). The interval 255–295 is disordered; that stretch reads TGTRLTPADKAEHMKRQRHPRLRPQSAQSSFPPSPGPSPDV. Residues Ser-288 and Ser-292 each carry the phosphoserine modification. In terms of domain architecture, CUE spans 296–338; it reads QLATLAQRVKEVLPHVPLGVIQRDLAKTGCVDLTITNLLEGAV. The disordered stretch occupies residues 350 to 369; it reads QSLPTASASKFPSSGPVTPQ. Position 363 is a phosphoserine (Ser-363). A Phosphothreonine modification is found at Thr-367.

The protein belongs to the AUP1 family. As to quaternary structure, identified in a complex that contains SEL1L, OS9, FAF2/UBXD8, UBE2J1/UBC6E and AUP1. Interacts with the cytoplasmic tail of ITGA2B, ITGA1, ITGA2, ITGA5, ITGAV and ITGAM. Interacts (via C-terminus) with ubiquitin-conjugating enzyme UBE2G2; the interaction recruits UBE2G2 to lipid droplets. Interacts with ubiquitin ligases AMFR/gp78 and RNF139/TRC8; this promotes interaction of UBE2G2 with AMFR and RNF139. Interacts with apolipoprotein APOB. In terms of assembly, (Microbial infection) Interacts with Dengue virus NS4A; the interaction occurs in the presence of Dengue virus NS4B and induces lipophagy which facilitates production of virus progeny. Post-translationally, monoubiquitinated and diubiquitinated. (Microbial infection) Not ubiquitinated following Dengue virus infection. Detected in blood platelets and leukocytes (at protein level). Ubiquitous. Highly expressed in placenta, liver, kidney, skeletal muscle, heart and brain.

It localises to the endoplasmic reticulum membrane. Its subcellular location is the lipid droplet. The protein localises to the cytoplasmic vesicle. It is found in the autophagosome. Functionally, plays a role in the translocation of terminally misfolded proteins from the endoplasmic reticulum lumen to the cytoplasm and their degradation by the proteasome. Plays a role in lipid droplet formation. Induces lipid droplet clustering. Recruits ubiquitin-conjugating enzyme UBE2G2 to lipid droplets which facilitates its interaction with ubiquitin ligases AMFR/gp78 and RNF139/TRC8, leading to sterol-induced ubiquitination of HMGCR and its subsequent proteasomal degradation. Also required for the degradation of INSIG1, SREBF1 and SREBF2. Plays a role in regulating assembly and secretion of very low density lipoprotein particles and stability of apolipoprotein APOB. Its function is as follows. (Microbial infection) Following Dengue virus infection, required for induction of lipophagy which facilitates production of virus progeny particles. The polypeptide is Lipid droplet-regulating VLDL assembly factor AUP1 (Homo sapiens (Human)).